The following is a 342-amino-acid chain: Phosphoribosylformylglycinamidine cyclo-ligase (342 aa).

This sequence belongs to the AIR synthase family.

Its subcellular location is the cytoplasm. It carries out the reaction 2-formamido-N(1)-(5-O-phospho-beta-D-ribosyl)acetamidine + ATP = 5-amino-1-(5-phospho-beta-D-ribosyl)imidazole + ADP + phosphate + H(+). It functions in the pathway purine metabolism; IMP biosynthesis via de novo pathway; 5-amino-1-(5-phospho-D-ribosyl)imidazole from N(2)-formyl-N(1)-(5-phospho-D-ribosyl)glycinamide: step 2/2. The chain is Phosphoribosylformylglycinamidine cyclo-ligase from Staphylococcus aureus (strain USA300).